Consider the following 299-residue polypeptide: Troponin T, cardiac muscle (299 aa).

Over residues 1 to 71 the composition is skewed to acidic residues; that stretch reads MSDAEEEVVE…EARDAEDGPV (71 aa). Disordered stretches follow at residues 1-97 and 137-220; these read MSDA…GERV and DRIE…EKKK. Serine 2 carries the N-acetylserine modification. Serine 2 bears the Phosphoserine mark. Basic and acidic residues-rich tracts occupy residues 137-185 and 204-220; these read DRIE…DEAR and QTERKSGKRQTEREKKK. Threonine 205 carries the phosphothreonine; by PKC/PRKCA modification. Phosphoserine; by PKC/PRKCA is present on serine 209. Threonine 214 carries the phosphothreonine; by PKC/PRKCA and RAF1 modification. Threonine 295 carries the phosphothreonine; by PKC/PRKCA modification.

This sequence belongs to the troponin T family. Phosphorylation at Thr-214 by PRKCA induces significant reduction in myofilament calcium sensitivity and actomyosin ATPase activity.

Functionally, troponin T is the tropomyosin-binding subunit of troponin, the thin filament regulatory complex which confers calcium-sensitivity to striated muscle actomyosin ATPase activity. The chain is Troponin T, cardiac muscle (Tnnt2) from Rattus norvegicus (Rat).